Here is a 134-residue protein sequence, read N- to C-terminus: Profilin-1 (134 aa).

Residues Cys13 and Cys118 are joined by a disulfide bond. Residues Ala84–Thr100 carry the Involved in PIP2 interaction motif. Residue Thr114 is modified to Phosphothreonine.

Belongs to the profilin family. As to quaternary structure, occurs in many kinds of cells as a complex with monomeric actin in a 1:1 ratio. Phosphorylated by MAP kinases.

It localises to the cytoplasm. The protein resides in the cytoskeleton. Functionally, binds to actin and affects the structure of the cytoskeleton. At high concentrations, profilin prevents the polymerization of actin, whereas it enhances it at low concentrations. The polypeptide is Profilin-1 (Olea europaea (Common olive)).